The primary structure comprises 493 residues: Glutamyl-tRNA(Gln) amidotransferase subunit A (493 aa).

Active-site charge relay system residues include K79 and S159. The active-site Acyl-ester intermediate is S183.

It belongs to the amidase family. GatA subfamily. Heterotrimer of A, B and C subunits.

The catalysed reaction is L-glutamyl-tRNA(Gln) + L-glutamine + ATP + H2O = L-glutaminyl-tRNA(Gln) + L-glutamate + ADP + phosphate + H(+). Allows the formation of correctly charged Gln-tRNA(Gln) through the transamidation of misacylated Glu-tRNA(Gln) in organisms which lack glutaminyl-tRNA synthetase. The reaction takes place in the presence of glutamine and ATP through an activated gamma-phospho-Glu-tRNA(Gln). This Brucella abortus (strain S19) protein is Glutamyl-tRNA(Gln) amidotransferase subunit A.